The sequence spans 389 residues: Chalcone synthase (389 aa).

The active site involves Cys-164.

Belongs to the thiolase-like superfamily. Chalcone/stilbene synthases family.

It carries out the reaction (E)-4-coumaroyl-CoA + 3 malonyl-CoA + 3 H(+) = 2',4,4',6'-tetrahydroxychalcone + 3 CO2 + 4 CoA. The protein operates within secondary metabolite biosynthesis; flavonoid biosynthesis. In terms of biological role, the primary product of this enzyme is 4,2',4',6'-tetrahydroxychalcone (also termed naringenin-chalcone or chalcone) which can under specific conditions spontaneously isomerize into naringenin. The protein is Chalcone synthase (CHS) of Pueraria montana var. lobata (Kudzu vine).